The primary structure comprises 775 residues: Armadillo-like helical domain-containing protein 4 (775 aa).

Residues 1-47 (MLQDSITGIVNSFNLFFPSTMSRPTLMPTCVAFCSILFLTLATGCQA) form the signal peptide. Topologically, residues 48-715 (FPKVERRETA…KDKAGYMSGM (668 aa)) are extracellular. The N-linked (GlcNAc...) asparagine glycan is linked to asparagine 76. Disordered stretches follow at residues 120-148 (AGLLHPTSPGVYSSSEPVVSASEQEPGPS), 247-273 (VPGVDSTGDMEPDRERPSEMAADDGQS), and 324-366 (KFES…PSST). Positions 129–142 (GVYSSSEPVVSASE) are enriched in polar residues. Basic and acidic residues predominate over residues 324 to 335 (KFESISRGRPPE). The N-linked (GlcNAc...) asparagine glycan is linked to asparagine 476. Residues 559–669 (IPVLGSPMAP…PGITSQEPDI (111 aa)) are disordered. The span at 577–599 (TISSALPSEGRTSPSISRPNTAA) shows a compositional bias: polar residues. Residues 606–640 (LESEEVEDDEDEEDEEDEEEEEEDEEDEEDEEDKE) are compositionally biased toward acidic residues. Residues 716–736 (LVPVGVGIAGALFILGALYSI) traverse the membrane as a helical segment. At 737 to 775 (KVMNRRRRNGFKRHKRKQREFNSMQDRVMLLADSSEDEF) the chain is on the cytoplasmic side. 2 positions are modified to phosphoserine: serine 770 and serine 771.

Interacts with IL6ST; this interaction prevents IL6ST protein homodimerization and bridges ARMH4 with IL6R and STAT3 and therefore inhibits phosphorylation of STAT3 at 'Tyr-705'. Interacts (via cytoplasmic tail) with RICTOR; this interaction bridges ARMH4 to the mTORC2 complex and inhibits the mTORC2 kinase activity. Expressed in bone-marroew cells.

The protein localises to the membrane. May modulate immune response and may play a role in inflammation. Down-modulates STAT3 signaling throught direct interaction with IL6ST, resulting in the inhibition of phosphorylation of STAT3 at 'Tyr-705'. May negatively regulates AKT signaling by modulating the activity of mTORC2 complex through RICTOR interaction. In Mus musculus (Mouse), this protein is Armadillo-like helical domain-containing protein 4.